Consider the following 123-residue polypeptide: Large ribosomal subunit protein bL12 (123 aa).

Belongs to the bacterial ribosomal protein bL12 family. Homodimer. Part of the ribosomal stalk of the 50S ribosomal subunit. Forms a multimeric L10(L12)X complex, where L10 forms an elongated spine to which 2 to 4 L12 dimers bind in a sequential fashion. Binds GTP-bound translation factors.

Its function is as follows. Forms part of the ribosomal stalk which helps the ribosome interact with GTP-bound translation factors. Is thus essential for accurate translation. In Marinomonas sp. (strain MWYL1), this protein is Large ribosomal subunit protein bL12.